Consider the following 348-residue polypeptide: MTAPSQVLKIRRPDDWHLHLRDGDMLKTVVPYTSEIYGRAIVMPNLAPPVTTVEAAVAYRQRILDAVPAGHDFTPLMTCYLTDSLDPNELERGFNEAVFTAAKLYPANATTNSSHGVTSIDAIMPVLERMEKIGMPLLVHGEVTHADIDIFDREARFIESVMEPLRQRLTALKVVFEHITTKDAADYVRDGNERLAATITPQHLMFNRNHMLVGGVRPHLYCLPILKRNIHQQALRELVTSGFNRVFLGTDSAPHARHRKESSCGCAGCFNAPTALGSYATVFEEMNALQHFEAFCSVNGPQFYGLPVNDTFIELVREEQQVAESIALTDDTLVPFLAGETVRWSVKQ.

Positions 17 and 19 each coordinate Zn(2+). Substrate-binding positions include 19–21 and N45; that span reads HLR. Residues K103, H140, and H178 each coordinate Zn(2+). An N6-carboxylysine modification is found at K103. Residue H140 coordinates substrate. L223 is a binding site for substrate. A Zn(2+)-binding site is contributed by D251. D251 is a catalytic residue. Substrate contacts are provided by H255 and A267.

This sequence belongs to the metallo-dependent hydrolases superfamily. DHOase family. Class II DHOase subfamily. As to quaternary structure, homodimer. Zn(2+) serves as cofactor.

It carries out the reaction (S)-dihydroorotate + H2O = N-carbamoyl-L-aspartate + H(+). It participates in pyrimidine metabolism; UMP biosynthesis via de novo pathway; (S)-dihydroorotate from bicarbonate: step 3/3. Catalyzes the reversible cyclization of carbamoyl aspartate to dihydroorotate. In Shigella flexneri serotype 5b (strain 8401), this protein is Dihydroorotase.